Reading from the N-terminus, the 174-residue chain is U1 small nuclear ribonucleoprotein C (174 aa).

The segment at 4–36 (YYCDYCDKYLTHDSPSVRKSHTVGKQHKLAVQL) adopts a Matrin-type zinc-finger fold. Low complexity-rich tracts occupy residues 82–109 (QQQQ…QQGM) and 122–140 (PHQF…FQPP). Residues 82-174 (QQQQQQQQQQ…QHNQPTIPGL (93 aa)) form a disordered region. The span at 141 to 163 (HHQHHPHQQHQQHQQHQHQHQHQ) shows a compositional bias: basic residues. A compositionally biased stretch (low complexity) spans 164-174 (QQHNQPTIPGL).

Belongs to the U1 small nuclear ribonucleoprotein C family. As to quaternary structure, component of the U1 snRNP. The U1 snRNP is composed of the U1 snRNA and the 7 core Sm proteins SNRPB, SNRPD1, SNRPD2, SNRPD3, SNRPE, SNRPF and SNRPG that assemble in a heptameric protein ring on the Sm site of the small nuclear RNA to form the core snRNP, and at least 3 U1 snRNP-specific proteins SNRNP70/U1-70K, SNRPA/U1-A and SNRPC/U1-C. SNRPC/U1-C interacts with U1 snRNA and the 5' splice-site region of the pre-mRNA.

Its subcellular location is the nucleus. Component of the spliceosomal U1 snRNP, which is essential for recognition of the pre-mRNA 5' splice-site and the subsequent assembly of the spliceosome. SNRPC/U1-C is directly involved in initial 5' splice-site recognition for both constitutive and regulated alternative splicing. The interaction with the 5' splice-site seems to precede base-pairing between the pre-mRNA and the U1 snRNA. Stimulates commitment or early (E) complex formation by stabilizing the base pairing of the 5' end of the U1 snRNA and the 5' splice-site region. This Dictyostelium discoideum (Social amoeba) protein is U1 small nuclear ribonucleoprotein C.